A 419-amino-acid polypeptide reads, in one-letter code: uncharacterized protein (419 aa).

The protein belongs to the MT-A70-like family.

It localises to the cytoplasm. This is an uncharacterized protein from Schizosaccharomyces pombe (strain 972 / ATCC 24843) (Fission yeast).